Here is an 856-residue protein sequence, read N- to C-terminus: V-type proton ATPase 116 kDa subunit a 2 (856 aa).

Residues 1-393 are Cytoplasmic-facing; the sequence is MGSLFRSETM…DAYGVGSYRE (393 aa). The helical transmembrane segment at 394-412 threads the bilayer; it reads VNPALFTIITFPFLFAVMF. Residues 413–414 lie on the Vacuolar side of the membrane; that stretch reads GD. The chain crosses the membrane as a helical span at residues 415–431; it reads FGHGFVMFLFALLLVLN. The Cytoplasmic segment spans residues 432–445; it reads ENHPRLNQSQEIMR. A helical transmembrane segment spans residues 446 to 475; it reads MFFNGRYILLLMGLFSVYTGLIYNDCFSKS. Topologically, residues 476–549 are vacuolar; it reads VNLFGSGWNV…ATNRLTFLNS (74 aa). 2 N-linked (GlcNAc...) asparagine glycosylation sites follow: Asn-484 and Asn-505. A helical transmembrane segment spans residues 550-569; that stretch reads FKMKMSVILGIIHMTFGVIL. Topologically, residues 570–587 are cytoplasmic; the sequence is GIFNHLHFRKKFNIYLVS. A helical membrane pass occupies residues 588-608; the sequence is IPELLFMLCIFGYLIFMIFYK. The Vacuolar segment spans residues 609–651; the sequence is WLVFSAETSRVAPSILIEFINMFLFPASKTSGLYTGQEYVQRV. A helical membrane pass occupies residues 652–671; the sequence is LLVVTALSVPVLFLGKPLFL. The Cytoplasmic segment spans residues 672 to 739; the sequence is LWLHNGRSCF…EILMTQVIHS (68 aa). Ser-695 and Ser-700 each carry phosphoserine. Residues 740 to 764 traverse the membrane as a helical segment; the sequence is IEYCLGCISNTASYLRLWALSLAHA. The Vacuolar portion of the chain corresponds to 765–785; the sequence is QLSDVLWAMLMRVGLRVDTTY. Residues 786-824 traverse the membrane as a helical segment; that stretch reads GVLLLLPVIALFAVLTIFILLIMEGLSAFLHAIRLHWVE. Topologically, residues 825–856 are cytoplasmic; sequence FQNKFYVGAGTKFVPFSFSLLSSKFNNDDSVA.

The protein belongs to the V-ATPase 116 kDa subunit family. V-ATPase is a heteromultimeric enzyme made up of two complexes: the ATP-hydrolytic V1 complex and the proton translocation V0 complex. The V1 complex consists of three catalytic AB heterodimers that form a heterohexamer, three peripheral stalks each consisting of EG heterodimers, one central rotor including subunits D and F, and the regulatory subunits C and H. The proton translocation complex V0 consists of the proton transport subunit a, a ring of proteolipid subunits c9c'', rotary subunit d, subunits e and f, and the accessory subunits ATP6AP1/Ac45 and ATP6AP2/PRR. Directly interacts with PSCD2 through its N-terminal cytosolic tail in an intra-endosomal acidification-dependent manner. Disruption of this interaction results in the inhibition of endocytosis. Interacts with SPAAR.

It is found in the cell membrane. The protein resides in the endosome membrane. Functionally, subunit of the V0 complex of vacuolar(H+)-ATPase (V-ATPase), a multisubunit enzyme composed of a peripheral complex (V1) that hydrolyzes ATP and a membrane integral complex (V0) that translocates protons. V-ATPase is responsible for acidifying and maintaining the pH of intracellular compartments and in some cell types, is targeted to the plasma membrane, where it is responsible for acidifying the extracellular environment. Essential component of the endosomal pH-sensing machinery. May play a role in maintaining the Golgi functions, such as glycosylation maturation, by controlling the Golgi pH. In aerobic conditions, involved in intracellular iron homeostasis, thus triggering the activity of Fe(2+) prolyl hydroxylase (PHD) enzymes, and leading to HIF1A hydroxylation and subsequent proteasomal degradation. The sequence is that of V-type proton ATPase 116 kDa subunit a 2 (ATP6V0A2) from Homo sapiens (Human).